Here is a 399-residue protein sequence, read N- to C-terminus: Elongation factor Tu (399 aa).

The tr-type G domain occupies 10–204; that stretch reads KPHVNIGTIG…AVDSSIPEPE (195 aa). The tract at residues 19–26 is G1; the sequence is GHVDHGKT. Residue 19 to 26 participates in GTP binding; the sequence is GHVDHGKT. Thr-26 is a Mg(2+) binding site. The G2 stretch occupies residues 60–64; the sequence is GITIN. The G3 stretch occupies residues 81–84; the sequence is DCPG. GTP is bound by residues 81 to 85 and 136 to 139; these read DCPGH and NKCD. Residues 136-139 form a G4 region; sequence NKCD. The tract at residues 174-176 is G5; that stretch reads SGL.

It belongs to the TRAFAC class translation factor GTPase superfamily. Classic translation factor GTPase family. EF-Tu/EF-1A subfamily. In terms of assembly, monomer.

It is found in the cytoplasm. The catalysed reaction is GTP + H2O = GDP + phosphate + H(+). Functionally, GTP hydrolase that promotes the GTP-dependent binding of aminoacyl-tRNA to the A-site of ribosomes during protein biosynthesis. This chain is Elongation factor Tu, found in Synechococcus sp. (strain CC9605).